A 29-amino-acid polypeptide reads, in one-letter code: NAD(P)H-quinone oxidoreductase subunit 5, chloroplastic (29 aa).

Residues 1 to 15 (SGSIIHSMEANVGYS) form a helical membrane-spanning segment.

Belongs to the complex I subunit 5 family. NDH is composed of at least 16 different subunits, 5 of which are encoded in the nucleus.

It localises to the plastid. Its subcellular location is the chloroplast thylakoid membrane. The enzyme catalyses a plastoquinone + NADH + (n+1) H(+)(in) = a plastoquinol + NAD(+) + n H(+)(out). It catalyses the reaction a plastoquinone + NADPH + (n+1) H(+)(in) = a plastoquinol + NADP(+) + n H(+)(out). In terms of biological role, NDH shuttles electrons from NAD(P)H:plastoquinone, via FMN and iron-sulfur (Fe-S) centers, to quinones in the photosynthetic chain and possibly in a chloroplast respiratory chain. The immediate electron acceptor for the enzyme in this species is believed to be plastoquinone. Couples the redox reaction to proton translocation, and thus conserves the redox energy in a proton gradient. The chain is NAD(P)H-quinone oxidoreductase subunit 5, chloroplastic from Pseudotsuga menziesii (Douglas-fir).